The primary structure comprises 441 residues: POC1 centriolar protein homolog A (441 aa).

7 WD repeats span residues 16 to 55 (GHRDTVTTVDFNPNTKQLASGSMDSCLMIWNMKPQMRAYR), 58 to 97 (GHKDAILSVDFSPSGHLIASASRDKTVRLWVPSVKGESTV), 100 to 139 (AHTGTVRSVSFSGDGQSLVTASDDKTIKVWTVHRQKFLFS), 142 to 181 (QHINWVRCAKFSPDGRLIVSASDDKTIKLWDKTSRECIHS), 184 to 223 (EHGGFVNFVDFHPSGTCIAAAATDNTVKVWDIRMNKLIQH), 226 to 265 (VHSGVVNSLSFHPSGNYLITASNDSTLKVLDLLEGRLLYT), and 268 to 307 (GHQGPVTSVKFSREGEFFASGGSDEQVMVWKTNFDSASYA). Positions 323–380 (DYTSGVPAADRHRPERNAQTDQADDLEPRHIQMSAKDRSSPLSYTSRSIDQHHPQAED) are disordered. Composition is skewed to basic and acidic residues over residues 331 to 340 (ADRHRPERNA), 348 to 361 (LEPRHIQMSAKDRS), and 371 to 380 (IDQHHPQAED). Residues 400-427 (LTRTVGILEQRLSLTEDKLKECIDNQQA) adopt a coiled-coil conformation.

This sequence belongs to the WD repeat POC1 family. In terms of assembly, interacts with pat.

The protein resides in the cytoplasm. The protein localises to the cytoskeleton. In terms of biological role, may play an important role in centriole assembly and/or stability and ciliogenesis. The sequence is that of POC1 centriolar protein homolog A (poc1a) from Xenopus tropicalis (Western clawed frog).